Consider the following 292-residue polypeptide: Ribosomal RNA small subunit methyltransferase A (292 aa).

Residues Asn28, Leu30, Gly55, Glu76, Asp101, and Asn126 each contribute to the S-adenosyl-L-methionine site.

The protein belongs to the class I-like SAM-binding methyltransferase superfamily. rRNA adenine N(6)-methyltransferase family. RsmA subfamily.

It localises to the cytoplasm. It catalyses the reaction adenosine(1518)/adenosine(1519) in 16S rRNA + 4 S-adenosyl-L-methionine = N(6)-dimethyladenosine(1518)/N(6)-dimethyladenosine(1519) in 16S rRNA + 4 S-adenosyl-L-homocysteine + 4 H(+). In terms of biological role, specifically dimethylates two adjacent adenosines (A1518 and A1519) in the loop of a conserved hairpin near the 3'-end of 16S rRNA in the 30S particle. May play a critical role in biogenesis of 30S subunits. The protein is Ribosomal RNA small subunit methyltransferase A of Bacillus anthracis.